The chain runs to 146 residues: Superoxide dismutase [Mn] 2 (146 aa).

Residues His42, Asp126, and His130 each coordinate Mn(2+).

It belongs to the iron/manganese superoxide dismutase family. Mn(2+) serves as cofactor.

The enzyme catalyses 2 superoxide + 2 H(+) = H2O2 + O2. Its function is as follows. Destroys superoxide anion radicals which are normally produced within the cells and which are toxic to biological systems. In Haloferax mediterranei (Halobacterium mediterranei), this protein is Superoxide dismutase [Mn] 2 (sod2).